The primary structure comprises 123 residues: Small ribosomal subunit protein uS13 (123 aa).

Residues 96 to 123 are disordered; sequence LPVRGQRTKTNARTRKGPKKTVGARRKK.

It belongs to the universal ribosomal protein uS13 family. In terms of assembly, part of the 30S ribosomal subunit. Forms a loose heterodimer with protein S19. Forms two bridges to the 50S subunit in the 70S ribosome.

In terms of biological role, located at the top of the head of the 30S subunit, it contacts several helices of the 16S rRNA. In the 70S ribosome it contacts the 23S rRNA (bridge B1a) and protein L5 of the 50S subunit (bridge B1b), connecting the 2 subunits; these bridges are implicated in subunit movement. Contacts the tRNAs in the A and P-sites. This chain is Small ribosomal subunit protein uS13, found in Desulforamulus reducens (strain ATCC BAA-1160 / DSM 100696 / MI-1) (Desulfotomaculum reducens).